The following is a 572-amino-acid chain: Proline--tRNA ligase (572 aa).

The protein belongs to the class-II aminoacyl-tRNA synthetase family. ProS type 1 subfamily. In terms of assembly, homodimer.

It localises to the cytoplasm. The catalysed reaction is tRNA(Pro) + L-proline + ATP = L-prolyl-tRNA(Pro) + AMP + diphosphate. In terms of biological role, catalyzes the attachment of proline to tRNA(Pro) in a two-step reaction: proline is first activated by ATP to form Pro-AMP and then transferred to the acceptor end of tRNA(Pro). As ProRS can inadvertently accommodate and process non-cognate amino acids such as alanine and cysteine, to avoid such errors it has two additional distinct editing activities against alanine. One activity is designated as 'pretransfer' editing and involves the tRNA(Pro)-independent hydrolysis of activated Ala-AMP. The other activity is designated 'posttransfer' editing and involves deacylation of mischarged Ala-tRNA(Pro). The misacylated Cys-tRNA(Pro) is not edited by ProRS. This chain is Proline--tRNA ligase, found in Photorhabdus laumondii subsp. laumondii (strain DSM 15139 / CIP 105565 / TT01) (Photorhabdus luminescens subsp. laumondii).